Reading from the N-terminus, the 354-residue chain is Trans-3-hydroxy-L-proline dehydratase (354 aa).

C104 serves as the catalytic Proton acceptor. Residues 105–106, D269, and 274–275 each bind substrate; these read GH and GS.

The protein belongs to the proline racemase family. In terms of assembly, homodimer. In terms of tissue distribution, ubiquitously expressed.

It carries out the reaction trans-3-hydroxy-L-proline = 1-pyrroline-2-carboxylate + H2O. Catalyzes the dehydration of trans-3-hydroxy-L-proline to Delta(1)-pyrroline-2-carboxylate (Pyr2C). May be required to degrade trans-3-hydroxy-L-proline from the diet and originating from the degradation of proteins such as collagen-IV that contain it. This chain is Trans-3-hydroxy-L-proline dehydratase (L3HYPDH), found in Homo sapiens (Human).